Consider the following 527-residue polypeptide: Probable guanine deaminase (527 aa).

Zn(2+) is bound by residues His-79 and His-81. Substrate-binding positions include 81-84, 212-213, 239-242, and Asp-329; these read HAPQ, RF, and HISE. The Zn(2+) site is built by His-239 and Asp-329.

The protein belongs to the metallo-dependent hydrolases superfamily. ATZ/TRZ family. Zn(2+) is required as a cofactor.

The catalysed reaction is guanine + H2O + H(+) = xanthine + NH4(+). It functions in the pathway purine metabolism; guanine degradation; xanthine from guanine: step 1/1. Catalyzes the hydrolytic deamination of guanine, producing xanthine and ammonia. The protein is Probable guanine deaminase of Schizosaccharomyces pombe (strain 972 / ATCC 24843) (Fission yeast).